Here is a 151-residue protein sequence, read N- to C-terminus: CD-NTase-associated protein 19 (151 aa).

3 helical membrane passes run 25 to 45 (TVFN…GVTL), 52 to 72 (VLFT…FWKL), and 127 to 147 (ISFV…FLMK).

This sequence belongs to the Cap19 family.

It localises to the cell inner membrane. Membrane protein component of a CBASS (cyclic oligonucleotide-based antiphage signaling system) which provides immunity against bacteriophage. The CD-NTase protein synthesizes cyclic nucleotides in response to infection; these serve as specific second messenger signals. The signals activate a diverse range of effectors, leading to bacterial cell death and thus abortive phage infection. A type III CBASS system. Expression of this CBASS system (Cap17-CapW-CdnC-Cap7-Cap6-Cap18-Cap19) in a susceptible E.coli (strain JP313) confers resistance to bacteriophage lambda cI-. The polypeptide is CD-NTase-associated protein 19 (Escherichia coli).